Consider the following 233-residue polypeptide: Apoptosis regulator Bcl-2 (233 aa).

The BH4 motif lies at 10–30; it reads DNREIVLKYIHYKLSQRGYDW. Residues 32-86 are disordered; it reads AGEDRPPVPPAPAPAAAPAAVAAAGASSHHRPEPPGSAAASEVPPAEGLRPAPPG. A BH3 motif is present at residues 87–101; that stretch reads VHLALRQAGDEFSRR. The BH1 motif lies at 130 to 149; it reads ELFRDGVNWGRIVAFFEFGG. The BH2 motif lies at 181–196; it reads NWIQDNGGWDAFVELY. A helical transmembrane segment spans residues 208–228; sequence WISLKTILSLVLVGACITLGA.

This sequence belongs to the Bcl-2 family. As to quaternary structure, forms homodimers, and heterodimers with BAX, BAD, BAK and Bcl-X(L). Heterodimerization with BAX requires intact BH1 and BH2 motifs, and is necessary for anti-apoptotic activity. Also interacts with APAF1 and RAF-1. As to expression, in adult chicken expressed, in thymus, spleen, kidney, heart, ovary and brain, with the highest levels in the thymus. In the embryo, highly levels expressed in all tissues with high levels in the bursa of Fabricius.

Its subcellular location is the mitochondrion outer membrane. The protein resides in the nucleus membrane. It is found in the endoplasmic reticulum membrane. It localises to the cytoplasm. Suppresses apoptosis in a variety of cell systems including factor-dependent lymphohematopoietic and neural cells. Regulates cell death by controlling the mitochondrial membrane permeability. Appears to function in a feedback loop system with caspases. Inhibits caspase activity either by preventing the release of cytochrome c from the mitochondria and/or by binding to the apoptosis-activating factor (APAF-1). This is Apoptosis regulator Bcl-2 (BCL2) from Gallus gallus (Chicken).